A 1446-amino-acid polypeptide reads, in one-letter code: Centrosomal protein of 164 kDa (1446 aa).

The interval 1-195 is interaction with ATRIP; sequence MARRPILLGD…PPQGLKAAAC (195 aa). The 34-residue stretch at 56–89 folds into the WW domain; that stretch reads APLPKGWKPCQNITGDLYYFNFDTGQSIWDHPCD. 2 disordered regions span residues 106 to 132 and 159 to 185; these read PGAIKKKDKKKKKEKKNKKDKETSKSP and PPSALRGSQSVSLGSSADSGHLGEPTL. The span at 109–121 shows a compositional bias: basic residues; sequence IKKKDKKKKKEKK. Polar residues predominate over residues 164 to 176; sequence RGSQSVSLGSSAD. Position 202 is a phosphoserine (S202). Disordered stretches follow at residues 217 to 238, 250 to 408, 424 to 570, and 830 to 849; these read EETNEEDEEESDNQSVRSSSEL, GGNF…SFLG, GDTL…EPAA, and KRQEVEREHERKMDKMKEEH. The segment covering 218 to 228 has biased composition (acidic residues); it reads ETNEEDEEESD. Positions 257–277 are enriched in basic and acidic residues; the sequence is ESPRTSQPDKKDVSLDSDADR. The span at 288-312 shows a compositional bias: polar residues; the sequence is GADSSVASANGSKSQGRGASPWNPQ. 2 stretches are compositionally biased toward basic and acidic residues: residues 355 to 372 and 384 to 397; these read KEGECRRESAAKEPKEAS and SEIHGHLKDARHSG. Residues 451–461 show a composition bias toward polar residues; the sequence is SSIAEPQSKHT. 2 stretches are compositionally biased toward basic and acidic residues: residues 490-499 and 525-534; these read PEWKEAEGPG and ERAEEKHSQA. Residues 1143–1197 are a coiled coil; that stretch reads EVLGNMRKNLNEETRHLDEMKSAMRKGHDLLKKKEEKLIQLESSLQEEVSDEDTL. The interval 1261-1287 is disordered; sequence LGSLNSQPPPQGLGSQPPPPLFTSSLR. The segment covering 1267–1281 has biased composition (pro residues); that stretch reads QPPPQGLGSQPPPPL. Residues S1369 and S1371 each carry the phosphoserine modification.

As to quaternary structure, interacts (via N-terminus) with ATRIP. Interacts with ATM, ATR and MDC1. Interacts with XPA (via N-terminus) upon UV irradiation. Interacts with CEP83, CCDC92, TTBK2, DVL3, NPHP3 and weakly with NPHP4. Interacts with DZIP1.

Its subcellular location is the cytoplasm. It localises to the cytoskeleton. The protein resides in the microtubule organizing center. It is found in the centrosome. The protein localises to the centriole. Its subcellular location is the nucleus. Its function is as follows. Plays a role in microtubule organization and/or maintenance for the formation of primary cilia (PC), a microtubule-based structure that protrudes from the surface of epithelial cells. Plays a critical role in G2/M checkpoint and nuclear divisions. A key player in the DNA damage-activated ATR/ATM signaling cascade since it is required for the proper phosphorylation of H2AX, RPA, CHEK2 and CHEK1. Plays a critical role in chromosome segregation, acting as a mediator required for the maintenance of genomic stability through modulation of MDC1, RPA and CHEK1. The polypeptide is Centrosomal protein of 164 kDa (Mus musculus (Mouse)).